A 171-amino-acid chain; its full sequence is ATP synthase subunit b (171 aa).

A helical membrane pass occupies residues 31–51 (FFVVLAIFLVVLAVIGTFVVP).

This sequence belongs to the ATPase B chain family. As to quaternary structure, F-type ATPases have 2 components, F(1) - the catalytic core - and F(0) - the membrane proton channel. F(1) has five subunits: alpha(3), beta(3), gamma(1), delta(1), epsilon(1). F(0) has three main subunits: a(1), b(2) and c(10-14). The alpha and beta chains form an alternating ring which encloses part of the gamma chain. F(1) is attached to F(0) by a central stalk formed by the gamma and epsilon chains, while a peripheral stalk is formed by the delta and b chains.

The protein resides in the cell membrane. In terms of biological role, f(1)F(0) ATP synthase produces ATP from ADP in the presence of a proton or sodium gradient. F-type ATPases consist of two structural domains, F(1) containing the extramembraneous catalytic core and F(0) containing the membrane proton channel, linked together by a central stalk and a peripheral stalk. During catalysis, ATP synthesis in the catalytic domain of F(1) is coupled via a rotary mechanism of the central stalk subunits to proton translocation. Component of the F(0) channel, it forms part of the peripheral stalk, linking F(1) to F(0). The chain is ATP synthase subunit b from Mycobacterium bovis (strain ATCC BAA-935 / AF2122/97).